The primary structure comprises 103 residues: Small ribosomal subunit protein uS10 (103 aa).

Belongs to the universal ribosomal protein uS10 family. Part of the 30S ribosomal subunit.

In terms of biological role, involved in the binding of tRNA to the ribosomes. This is Small ribosomal subunit protein uS10 from Mycoplasmopsis pulmonis (strain UAB CTIP) (Mycoplasma pulmonis).